The chain runs to 103 residues: MAAVSLSVSTVKPLGDRVFVKVSESEEKTAGGILLPDTAKEKPQVGEVVQVGPGKRNDDGSRQAPEVGVGDNVLYSKYAGTDIKLGSDEYVLLSEKDILAVVN.

Belongs to the GroES chaperonin family. In terms of assembly, heptamer of 7 subunits arranged in a ring. Interacts with the chaperonin GroEL.

The protein localises to the cytoplasm. In terms of biological role, together with the chaperonin GroEL, plays an essential role in assisting protein folding. The GroEL-GroES system forms a nano-cage that allows encapsulation of the non-native substrate proteins and provides a physical environment optimized to promote and accelerate protein folding. GroES binds to the apical surface of the GroEL ring, thereby capping the opening of the GroEL channel. The polypeptide is Co-chaperonin GroES (Synechococcus sp. (strain CC9605)).